The sequence spans 87 residues: Small ribosomal subunit protein bS20 (87 aa).

It belongs to the bacterial ribosomal protein bS20 family.

Binds directly to 16S ribosomal RNA. This Lachnoclostridium phytofermentans (strain ATCC 700394 / DSM 18823 / ISDg) (Clostridium phytofermentans) protein is Small ribosomal subunit protein bS20.